Consider the following 421-residue polypeptide: Enolase 1 (421 aa).

Residue Gln-164 participates in (2R)-2-phosphoglycerate binding. The active-site Proton donor is Glu-206. Mg(2+) contacts are provided by Asp-243, Glu-287, and Asp-314. The (2R)-2-phosphoglycerate site is built by Lys-339, Arg-368, Ser-369, and Lys-390. The active-site Proton acceptor is Lys-339.

It belongs to the enolase family. In terms of assembly, component of the RNA degradosome, a multiprotein complex involved in RNA processing and mRNA degradation. The cofactor is Mg(2+).

The protein localises to the cytoplasm. Its subcellular location is the secreted. The protein resides in the cell surface. It catalyses the reaction (2R)-2-phosphoglycerate = phosphoenolpyruvate + H2O. It functions in the pathway carbohydrate degradation; glycolysis; pyruvate from D-glyceraldehyde 3-phosphate: step 4/5. Catalyzes the reversible conversion of 2-phosphoglycerate (2-PG) into phosphoenolpyruvate (PEP). It is essential for the degradation of carbohydrates via glycolysis. The protein is Enolase 1 of Methylococcus capsulatus (strain ATCC 33009 / NCIMB 11132 / Bath).